We begin with the raw amino-acid sequence, 272 residues long: HMP-PP phosphatase (272 aa).

Asp-8 functions as the Nucleophile in the catalytic mechanism. Residues Asp-8, Asp-10, and Asp-212 each contribute to the Mg(2+) site.

The protein belongs to the HAD-like hydrolase superfamily. Cof family. Requires Mg(2+) as cofactor.

It carries out the reaction 4-amino-2-methyl-5-(diphosphooxymethyl)pyrimidine + H2O = 4-amino-2-methyl-5-(phosphooxymethyl)pyrimidine + phosphate + H(+). Catalyzes the hydrolysis of 4-amino-2-methyl-5-hydroxymethylpyrimidine pyrophosphate (HMP-PP) to 4-amino-2-methyl-5-hydroxymethylpyrimidine phosphate (HMP-P). In Salmonella choleraesuis (strain SC-B67), this protein is HMP-PP phosphatase.